The chain runs to 347 residues: 4-hydroxy-2-oxovalerate aldolase (347 aa).

One can recognise a Pyruvate carboxyltransferase domain in the interval 2 to 252 (ILISDATLRD…DTRTTFERVM (251 aa)). 10–11 (RD) is a substrate binding site. A Mn(2+)-binding site is contributed by D11. Catalysis depends on H14, which acts as the Proton acceptor. Residues S164 and H191 each contribute to the substrate site. Mn(2+)-binding residues include H191 and H193.

This sequence belongs to the 4-hydroxy-2-oxovalerate aldolase family.

It catalyses the reaction (S)-4-hydroxy-2-oxopentanoate = acetaldehyde + pyruvate. This chain is 4-hydroxy-2-oxovalerate aldolase (mhpE), found in Burkholderia pseudomallei (strain K96243).